The chain runs to 512 residues: Maturase K (512 aa).

The protein belongs to the intron maturase 2 family. MatK subfamily.

It localises to the plastid. Its subcellular location is the chloroplast. Its function is as follows. Usually encoded in the trnK tRNA gene intron. Probably assists in splicing its own and other chloroplast group II introns. This is Maturase K from Lemna gibba (Swollen duckweed).